The following is a 552-amino-acid chain: Arginine--tRNA ligase (552 aa).

The 'HIGH' region signature appears at 123–133; the sequence is ANPTGPLTIGR.

It belongs to the class-I aminoacyl-tRNA synthetase family. Monomer.

Its subcellular location is the cytoplasm. The enzyme catalyses tRNA(Arg) + L-arginine + ATP = L-arginyl-tRNA(Arg) + AMP + diphosphate. This Pelodictyon phaeoclathratiforme (strain DSM 5477 / BU-1) protein is Arginine--tRNA ligase.